Consider the following 255-residue polypeptide: Probable iron chelatin transport ATP-binding protein HP_0888 (255 aa).

In terms of domain architecture, ABC transporter spans Leu3 to Pro240. Position 35–42 (Ala35–Thr42) interacts with ATP.

It belongs to the ABC transporter superfamily.

The protein localises to the cell inner membrane. In terms of biological role, part of a binding-protein-dependent transport system for an iron chelatin. Probably responsible for energy coupling to the transport system (Potential). This is Probable iron chelatin transport ATP-binding protein HP_0888 from Helicobacter pylori (strain ATCC 700392 / 26695) (Campylobacter pylori).